The primary structure comprises 325 residues: ATP phosphoribosyltransferase (325 aa).

It belongs to the ATP phosphoribosyltransferase family. Long subfamily. Mg(2+) serves as cofactor.

Its subcellular location is the cytoplasm. The catalysed reaction is 1-(5-phospho-beta-D-ribosyl)-ATP + diphosphate = 5-phospho-alpha-D-ribose 1-diphosphate + ATP. It functions in the pathway amino-acid biosynthesis; L-histidine biosynthesis; L-histidine from 5-phospho-alpha-D-ribose 1-diphosphate: step 1/9. Its activity is regulated as follows. Feedback inhibited by histidine. Its function is as follows. Catalyzes the condensation of ATP and 5-phosphoribose 1-diphosphate to form N'-(5'-phosphoribosyl)-ATP (PR-ATP). Has a crucial role in the pathway because the rate of histidine biosynthesis seems to be controlled primarily by regulation of HisG enzymatic activity. The sequence is that of ATP phosphoribosyltransferase from Afipia carboxidovorans (strain ATCC 49405 / DSM 1227 / KCTC 32145 / OM5) (Oligotropha carboxidovorans).